Consider the following 191-residue polypeptide: MSKARRWVIIVLSLAVLVMIGINMAEKDDTAQVVVNNNDPTYKSEHTDTLVYNPEGALSYRLIAQHVEYYSDQAVSWFTQPVLTTFDKDKIPTWSVKADKAKLTNDRMLYLYGHVEVNALVPDSQLRRITTDNAQINLVTQDVTSEDLVTLYGTTFNSSGLKMRGNLRSKNAELIEKVRTSYEIQNKQTQP.

Residues 7-25 (WVIIVLSLAVLVMIGINMA) traverse the membrane as a helical segment.

It belongs to the LptC family. Component of the lipopolysaccharide transport and assembly complex. Interacts with LptA and the LptBFG transporter complex.

The protein resides in the cell inner membrane. Its function is as follows. Involved in the assembly of lipopolysaccharide (LPS). Required for the translocation of LPS from the inner membrane to the outer membrane. Facilitates the transfer of LPS from the inner membrane to the periplasmic protein LptA. Could be a docking site for LptA. This is Lipopolysaccharide export system protein LptC from Escherichia coli O157:H7.